A 138-amino-acid polypeptide reads, in one-letter code: Small ribosomal subunit protein uS12 (138 aa).

Positions 33–55 are disordered; the sequence is KEHTNVSSPQKRGVCTRVGTMTP.

It belongs to the universal ribosomal protein uS12 family. In terms of assembly, part of the 30S ribosomal subunit. Contacts proteins S8 and S17. May interact with IF1 in the 30S initiation complex. Interacts with BrxC.

In terms of biological role, with S4 and S5 plays an important role in translational accuracy. Functionally, interacts with and stabilizes bases of the 16S rRNA that are involved in tRNA selection in the A site and with the mRNA backbone. Located at the interface of the 30S and 50S subunits, it traverses the body of the 30S subunit contacting proteins on the other side and probably holding the rRNA structure together. The combined cluster of proteins S8, S12 and S17 appears to hold together the shoulder and platform of the 30S subunit. This Bacillus subtilis (strain 168) protein is Small ribosomal subunit protein uS12 (rpsL).